The primary structure comprises 194 residues: Calcium channel flower (194 aa).

Residues 1-34 (MSFAEKITGLLARPNQQDPIGPEQPWYLKYGSRL) lie on the Cytoplasmic side of the membrane. A helical transmembrane segment spans residues 35–55 (LGIVAAFFAILFGLWNVFSII). Residues 56–65 (TLSVSCLVAG) are Extracellular-facing. A helical membrane pass occupies residues 66–88 (ILQMVAGFVVMLLEAPCCFVCFG). Residues 89–106 (QVNEIAEKVESKPLYFRA) are Cytoplasmic-facing. A helical transmembrane segment spans residues 107-127 (GLYIAMAIPPIILCFGLASLF). The Extracellular segment spans residues 128-194 (GSGLIFGTGV…TGAVGTDSNV (67 aa)). Important for promoting apoptosis stretches follow at residues 135–157 (TGVV…RAAA) and 135–192 (TGVV…GTDS).

Belongs to the calcium channel flower family. As to quaternary structure, associates with the dally/ magu complex. In terms of assembly, homomultimer. Associates with the dally/ magu complex. In terms of tissue distribution, detected in the imaginal wing disk (at protein level). Detected throughout the adult brain, including the optic lobe but, at much lower levels of expression than isoform Lose-A. As to expression, detected in the optic lobe (at protein level). Detected throughout the adult brain, including the optic lobe. Expressed in damaged and undamaged optic lobe neurons. In terms of tissue distribution, expressed in optic lobe neurons, with higher levels of expression in suboptimal neurons. Specifically expressed in injury-damaged optic lobe neurons.

The protein resides in the cell membrane. Its subcellular location is the cytoplasmic vesicle. The protein localises to the secretory vesicle. It localises to the synaptic vesicle membrane. It is found in the presynaptic cell membrane. The protein resides in the endosome. Its subcellular location is the synaptic vesicle. With respect to regulation, channel activity is inhibited by La(3+), which reduces Ca(2+) influx and thus inhibits it's function in promoting activity-dependent bulk endocytosis (ADBE) in response to high stimuli. In terms of biological role, transmembrane protein which mediates synaptic endocytosis, fitness-based cell culling, neuronal culling, morphogen gradient scaling, and calcium transport. Regulates synaptic endocytosis and hence couples exo- with endocytosis. Controls two major modes of synaptic vesicle (SV) endocytosis in the synaptic boutons of neuromuscular junctions (NMJs); Ca(2+) channel-independent Clathrin-mediated endocytosis (CME) in response to mild stimulation, and Ca(2+) channel-dependent activity-dependent bulk endocytosis (ADBE) in response to strong stimulation. Functions in ADBE and subsequent SV reformation from bulk endosomes by initiating Ca(2+) channel-dependent phosphatidylinositol 4,5-bisphosphate (PtdIns(4,5)P2) compartmentalization in synaptic boutons. There it acts at the periactive zone to provide the low Ca(2+) levels required to initiate Calcineurin activation and upregulate PtdIns(4,5)P2. Conversely PtdIns(4,5)P2 enhances fwe Ca(2+) channel-activity, establishing a positive feedback loop that induces PtdIns(4,5)P2 microdomain at the periactive zone. These microdomains trigger bulk membrane invagination (i.e. ADBE) by triggering actin polymerization while also promoting localization of fwe to bulk endosomes, thereby removing the ADBE trigger to reduce endocytosis and prevent excess membrane uptake. PtdIns(4,5)P2 then promotes SV reformation from the bulk endosomes, to coordinate ADBE and subsequent SV reformation. Different combinations of the flower isoforms at the cell membrane are also required for the identification and elimination of suboptimal or supernumerary cells during development, regeneration, and adulthood. Required for the recognition and elimination of unfit cells in the developing wing during cell competition. Also required for efficient identification and elimination of injured, damaged and/or dysfunctional neurons during regeneration of the adult brain. In the developing pupal retina, mediates the elimination of unwanted postmitotic neurons, including supernumerary photoreceptor neurons that form at the periphery of the retina and are contained within incomplete ommatidia units. Downstream of the flower fitness fingerprints, cells identified as unwanted or unfit are eliminated via apoptosis through the expression of ahuizotl (azot). However, the cells marked for elimination by the flower isoforms only undergo apoptosis if additional thresholds are met; (1) their neighboring fit/healthy cells express different levels of the fwe isoforms, and (2) the levels of the protective signal SPARC expressed by the loser or unwanted cells are unable to inhibit caspase activation. These additional thresholds for flower-mediated apoptosis, allows useful cells to recover from transient and limited stress before they are unnecessarily eliminated. Functions with dally and magu in a mechanism of scaling, which utilises apoptosis to ensure that the dpp morphogen gradient, which mediates organ growth, remains proportional to the size of the growing wing. In this mechanism, fwe represses dally- and Magu-dependent activity in expanding the gradient, and dally/Magu inhibits fwe-dependent apoptosis to keep cell death rate low. When the levels of these different proteins are optimally regulated the gradient correctly scales with organ growth but when this fails, fwe-mediated apoptosis is activated to trim the developing tissue to match the correct size of the gradient. Functions with the other flower isoforms to produce tissue-specific fitness fingerprints that identify unfit or fit cells during cell selection processes in order to maintain tissue health. In the wing imaginal disk, this isoform is highly expressed in healthy/normal cells but is down-regulated in cells with decreased fitness. During cell competition, if levels of this isoform in unfit cells is lower than in the surrounding neighboring cells, the suboptimal cells are recognized as 'loser' cells, and undergo elimination via apoptosis to be replaced by the surrounding healthy 'winner' cell population. Functionally, functions with the other flower isoforms to produce tissue-specific fitness fingerprints that identify unfit or fit cells during cell selection processes in order to maintain tissue health. In the wing imaginal disk, this isoform displays low levels of expression in healthy/normal cells but is up-regulated in cells with decreased fitness. During cell competition, if levels of this isoform in unfit cells is higher than in the surrounding neighboring cells, the suboptimal cells are recognized as 'loser' cells, and undergo elimination via apoptosis to be replaced by the surrounding healthy 'winner' cell population. Its function is as follows. Functions with the other flower isoforms to produce tissue-specific fitness fingerprints that identify unfit cells for cell selection processes during development, regeneration, and to maintain tissue health. During cell competition in certain tissues, marks suboptimal or damaged cells as 'loser' cells. In cells of the wing imaginal disk and damaged or dysfunctional neurons in the adult optic lobe, this isoform displays low to no expression in healthy/normal cells but is up-regulated in cells with decreased fitness or damage-affected neurons. During cell competition, if levels of this isoform in unfit cells is higher than in the surrounding neighboring cells, the suboptimal cells are recognized as 'loser' cells, and undergo elimination via apoptosis to be replaced by the surrounding healthy/undamaged 'winner' cell population. In the developing pupal retina, also required for the recognition and elimination of postmitotic neurons, including supernumerary photoreceptor neurons that form at the periphery of the retina and are contained within incomplete ommatidia units. Activity at the peripheral retina is induced by the wg signaling pathway but, once activated, it promotes apoptosis of supernumerary photoreceptor neurons independently of wg signaling and snail function. In Drosophila melanogaster (Fruit fly), this protein is Calcium channel flower (fwe).